The primary structure comprises 35 residues: Cycloamanide F proprotein (35 aa).

Residues 1–10 (MSDINATRLP) constitute a propeptide that is removed on maturation. The cyclopeptide (Ile-Pro) cross-link spans 11–18 (IVGILGLP). Positions 19-35 (CIGDDVNSTLTHGEDLC) are excised as a propeptide.

This sequence belongs to the MSDIN fungal toxin family. Post-translationally, processed by the macrocyclase-peptidase enzyme POPB to yield a cyclic decapeptide. POPB first removes 10 residues from the N-terminus. Conformational trapping of the remaining peptide forces the enzyme to release this intermediate rather than proceed to macrocyclization. The enzyme rebinds the remaining peptide in a different conformation and catalyzes macrocyclization of the N-terminal 8 residues.

Its function is as follows. Cyclic octapeptide that belongs to the MSDIN-like toxin family responsible for a large number of food poisoning cases and deaths. Cycloaminide E is structurally related to other cycloamanides that are non-toxic to mammals but show immunosuppressive activity. The chain is Cycloamanide F proprotein from Amanita phalloides (Death cap).